The chain runs to 33 residues: Dermaseptin-H8 (33 aa).

Position 33 is a leucine amide (L33).

As to expression, expressed by the skin glands.

It is found in the secreted. In terms of biological role, has antimicrobial activity. In Pithecopus hypochondrialis (Orange-legged leaf frog), this protein is Dermaseptin-H8.